We begin with the raw amino-acid sequence, 245 residues long: Phycocyanobilin:ferredoxin oxidoreductase (245 aa).

This sequence belongs to the HY2 family.

The catalysed reaction is (2R,3Z)-phycocyanobilin + 4 oxidized [2Fe-2S]-[ferredoxin] = biliverdin IXalpha + 4 reduced [2Fe-2S]-[ferredoxin] + 4 H(+). In terms of biological role, catalyzes the four-electron reduction of biliverdin IX-alpha (2-electron reduction at both the A and D rings); the reaction proceeds via an isolatable 2-electron intermediate, 181,182-dihydrobiliverdin. Upon overexpression in E.coli with PCB:ferredoxin oxidoreductase, CpeS and either CpcB or PecB permits synthesis of phycocyanin-coupled CpcB or PecB. This chain is Phycocyanobilin:ferredoxin oxidoreductase (pcyA), found in Nostoc sp. (strain PCC 7120 / SAG 25.82 / UTEX 2576).